The following is a 520-amino-acid chain: Genome polyprotein (520 aa).

Ser-2 is modified (N-acetylserine; by host). Positions 2–23 (STNPKPQRKTKRNTNRRPQDVK) are interaction with STAT1. The segment at 2 to 58 (STNPKPQRKTKRNTNRRPQDVKFPGGGQIVGGVYLLTRRGPRLGVRATRKTSERSQP) is interaction with EIF2AK2/PKR. The segment at 2–59 (STNPKPQRKTKRNTNRRPQDVKFPGGGQIVGGVYLLTRRGPRLGVRATRKTSERSQPR) is interaction with DDX3X. Residues 2 to 75 (STNPKPQRKT…PKARRPEGRA (74 aa)) form a disordered region. Topologically, residues 2–168 (STNPKPQRKT…EDGVNYATGN (167 aa)) are cytoplasmic. 2 short sequence motifs (nuclear localization signal) span residues 5–13 (PKPQRKTKR) and 38–43 (TRRGPR). Over residues 7–16 (PQRKTKRNTN) the composition is skewed to basic residues. Residue Ser-53 is modified to Phosphoserine; by host. 2 short sequence motifs (nuclear localization signal) span residues 58-64 (PRGRRQP) and 66-71 (PKARRP). The span at 58 to 68 (PRGRRQPIPKA) shows a compositional bias: basic residues. Phosphoserine; by host is present on Ser-99. The segment at 112-152 (PRRRSRNLGKVIDTLTCGFADLMGYIPLVGAPLGGASRALA) is important for endoplasmic reticulum and mitochondrial localization. At Ser-116 the chain carries Phosphoserine; by host PKA. The tract at residues 122–173 (VIDTLTCGFADLMGYIPLVGAPLGGASRALAHGVRVLEDGVNYATGNLPGCS) is interaction with APOA2. Residues 164–167 (YATG) form an important for lipid droplets localization region. A helical membrane pass occupies residues 169-189 (LPGCSFSIFLSALMSCLTTPA). A propeptide spans 178 to 191 (LSALMSCLTTPASA) (ER anchor for the core protein, removed in mature form by host signal peptidase). Residues 190–358 (SAYEVRNVSG…AGAHWGVLAG (169 aa)) lie on the Lumenal side of the membrane. 4 N-linked (GlcNAc...) asparagine; by host glycosylation sites follow: Asn-196, Asn-209, Asn-234, and Asn-250. The important for fusion stretch occupies residues 265 to 296 (LVGAATLCSAMYVGDLCGSVFLVSQLFTFSPR). An N-linked (GlcNAc...) asparagine; by host glycan is attached at Asn-305. The helical transmembrane segment at 359-379 (LAYYSMVGNWAKVLIVMLLFA) threads the bilayer. The Lumenal portion of the chain corresponds to 380 to 520 (GVDGANTHTV…TPSPVVVGTT (141 aa)). Residues 385–411 (NTHTVGGTEGFATQRLTSLFALGPSQK) are HVR1. The N-linked (GlcNAc...) asparagine; by host glycan is linked to Asn-418. N-linked (GlcNAc...) (high mannose) asparagine; by host glycans are attached at residues Asn-424, Asn-431, and Asn-449. Cys-453 and Cys-460 are disulfide-bonded. Residues 474–479 (TYAEPS) are HVR2. The tract at residues 480–493 (ISEQRPYCWHYAPR) is CD81-binding 1. Cystine bridges form between Cys-487–Cys-495 and Cys-504–Cys-509.

The protein belongs to the hepacivirus polyprotein family. As to quaternary structure, homooligomer. Interacts with E1 (via C-terminus). Interacts with the non-structural protein 5A. Interacts (via N-terminus) with host STAT1 (via SH2 domain); this interaction results in decreased STAT1 phosphorylation and ubiquitin-mediated proteasome-dependent STAT1 degradation, leading to decreased IFN-stimulated gene transcription. Interacts with host STAT3; this interaction constitutively activates STAT3. Interacts with host LTBR receptor. Interacts with host TNFRSF1A receptor and possibly induces apoptosis. Interacts with host HNRPK. Interacts with host YWHAE. Interacts with host UBE3A/E6AP. Interacts with host DDX3X. Interacts with host APOA2. Interacts with host RXRA protein. Interacts with host SP110 isoform 3/Sp110b; this interaction sequesters the transcriptional corepressor SP110 away from the nucleus. Interacts with host CREB3 nuclear transcription protein; this interaction triggers cell transformation. Interacts with host ACY3. Interacts with host C1QR1. Interacts with host RBM24; this interaction, which enhances the interaction of the mature core protein with 5'-UTR, may inhibit viral translation and favor replication. Interacts with host EIF2AK2/PKR; this interaction induces the autophosphorylation of EIF2AK2. Part of the viral assembly initiation complex composed of NS2, E1, E2, NS3, NS4A, NS5A and the mature core protein. In terms of assembly, forms a heterodimer with envelope glycoprotein E2. Interacts with mature core protein. Interacts with protease NS2. The heterodimer E1/E2 interacts with host CLDN1; this interaction plays a role in viral entry into host cell. Interacts with host SPSB2 (via C-terminus). Part of the viral assembly initiation complex composed of NS2, E1, E2, NS3, NS4A, NS5A and the mature core protein. Forms a heterodimer with envelope glycoprotein E1. Interacts with host CD81 and SCARB1 receptors; these interactions play a role in viral entry into host cell. Interacts with host EIF2AK2/PKR; this interaction inhibits EIF2AK2 and probably allows the virus to evade the innate immune response. Interacts with host CD209/DC-SIGN and CLEC4M/DC-SIGNR. Interact with host SPCS1; this interaction is essential for viral particle assembly. Interacts with protease NS2. The heterodimer E1/E2 interacts with host CLDN1; this interaction plays a role in viral entry into host cell. Part of the viral assembly initiation complex composed of NS2, E1, E2, NS3, NS4A, NS5A and the mature core protein. Specific enzymatic cleavages in vivo yield mature proteins. The structural proteins, core, E1, E2 and p7 are produced by proteolytic processing by host signal peptidases. The core protein precursor is synthesized as a 23 kDa, which is retained in the ER membrane through the hydrophobic signal peptide. Cleavage by the signal peptidase releases the 21 kDa mature core protein. The cleavage of the core protein precursor occurs between aminoacids 176 and 188 but the exact cleavage site is not known. Some degraded forms of the core protein appear as well during the course of infection. The other proteins (p7, NS2, NS3, NS4A, NS4B, NS5A and NS5B) are cleaved by the viral proteases. Autoprocessing between NS2 and NS3 is mediated by the NS2 cysteine protease catalytic domain and regulated by the NS3 N-terminal domain. Post-translationally, phosphorylated by host PKC and PKA. In terms of processing, ubiquitinated; mediated by UBE3A and leading to core protein subsequent proteasomal degradation. Highly N-glycosylated.

It is found in the host endoplasmic reticulum membrane. Its subcellular location is the host mitochondrion membrane. The protein localises to the virion. It localises to the host cytoplasm. The protein resides in the host nucleus. It is found in the host lipid droplet. Its subcellular location is the virion membrane. Functionally, packages viral RNA to form a viral nucleocapsid, and promotes virion budding. Participates in the viral particle production as a result of its interaction with the non-structural protein 5A. Binds RNA and may function as a RNA chaperone to induce the RNA structural rearrangements taking place during virus replication. Modulates viral translation initiation by interacting with viral IRES and 40S ribosomal subunit. Affects various cell signaling pathways, host immunity and lipid metabolism. Prevents the establishment of cellular antiviral state by blocking the interferon-alpha/beta (IFN-alpha/beta) and IFN-gamma signaling pathways and by blocking the formation of phosphorylated STAT1 and promoting ubiquitin-mediated proteasome-dependent degradation of STAT1. Activates STAT3 leading to cellular transformation. Regulates the activity of cellular genes, including c-myc and c-fos. May repress the promoter of p53, and sequester CREB3 and SP110 isoform 3/Sp110b in the cytoplasm. Represses cell cycle negative regulating factor CDKN1A, thereby interrupting an important check point of normal cell cycle regulation. Targets transcription factors involved in the regulation of inflammatory responses and in the immune response: suppresses TNF-induced NF-kappa-B activation, and activates AP-1. Binds to dendritic cells (DCs) via C1QR1, resulting in down-regulation of T-lymphocytes proliferation. Alters lipid metabolism by interacting with hepatocellular proteins involved in lipid accumulation and storage. Induces up-regulation of FAS promoter activity, and thereby contributes to the increased triglyceride accumulation in hepatocytes (steatosis). Forms a heterodimer with envelope glycoprotein E2, which mediates virus attachment to the host cell, virion internalization through clathrin-dependent endocytosis and fusion with host membrane. Fusion with the host cell is most likely mediated by both E1 and E2, through conformational rearrangements of the heterodimer required for fusion rather than a classical class II fusion mechanism. E1/E2 heterodimer binds host apolipoproteins such as APOB and ApoE thereby forming a lipo-viro-particle (LVP). APOE associated to the LVP allows the initial virus attachment to cell surface receptors such as the heparan sulfate proteoglycans (HSPGs), syndecan-1 (SDC1), syndecan-1 (SDC2), the low-density lipoprotein receptor (LDLR) and scavenger receptor class B type I (SCARB1). The cholesterol transfer activity of SCARB1 allows E2 exposure and binding of E2 to SCARB1 and the tetraspanin CD81. E1/E2 heterodimer binding on CD81 activates the epithelial growth factor receptor (EGFR) signaling pathway. Diffusion of the complex E1-E2-EGFR-SCARB1-CD81 to the cell lateral membrane allows further interaction with Claudin 1 (CLDN1) and occludin (OCLN) to finally trigger HCV entry. In terms of biological role, forms a heterodimer with envelope glycoprotein E1, which mediates virus attachment to the host cell, virion internalization through clathrin-dependent endocytosis and fusion with host membrane. Fusion with the host cell is most likely mediated by both E1 and E2, through conformational rearrangements of the heterodimer required for fusion rather than a classical class II fusion mechanism. The interaction between envelope glycoprotein E2 and host apolipoprotein E/APOE allows the proper assembly, maturation and infectivity of the viral particles. This interaction is probably promoted via the up-regulation of cellular autophagy by the virus. E1/E2 heterodimer binds host apolipoproteins such as APOB and APOE thereby forming a lipo-viro-particle (LVP). APOE associated to the LVP allows the initial virus attachment to cell surface receptors such as the heparan sulfate proteoglycans (HSPGs), syndecan-1 (SDC1), syndecan-1 (SDC2), the low-density lipoprotein receptor (LDLR) and scavenger receptor class B type I (SCARB1). The cholesterol transfer activity of SCARB1 allows E2 exposure and binding of E2 to SCARB1 and the tetraspanin CD81. E1/E2 heterodimer binding on CD81 activates the epithelial growth factor receptor (EGFR) signaling pathway. Diffusion of the complex E1-E2-EGFR-SCARB1-CD81 to the cell lateral membrane allows further interaction with Claudin 1 (CLDN1) and occludin (OCLN) to finally trigger HCV entry. Inhibits host EIF2AK2/PKR activation, preventing the establishment of an antiviral state. Viral ligand for CD209/DC-SIGN and CLEC4M/DC-SIGNR, which are respectively found on dendritic cells (DCs), and on liver sinusoidal endothelial cells and macrophage-like cells of lymph node sinuses. These interactions allow the capture of circulating HCV particles by these cells and subsequent facilitated transmission to permissive cells such as hepatocytes and lymphocyte subpopulations. The protein is Genome polyprotein of Hepatitis C virus (isolate HCV-KF) (HCV).